The sequence spans 96 residues: Large ribosomal subunit protein bL27 (96 aa).

A disordered region spans residues 13–33; sequence KGGGSTANGRNSAGRRLGAKA.

This sequence belongs to the bacterial ribosomal protein bL27 family.

This Lactobacillus acidophilus (strain ATCC 700396 / NCK56 / N2 / NCFM) protein is Large ribosomal subunit protein bL27.